We begin with the raw amino-acid sequence, 490 residues long: Katanin p60 ATPase-containing subunit A-like 1 (490 aa).

An N-acetylmethionine modification is found at Met-1. The tract at residues 95–184 (DPAVWPPPVP…DGEMPKFDGA (90 aa)) is disordered. A compositionally biased stretch (basic and acidic residues) spans 116–127 (PNREVRPLRKEM). A compositionally biased stretch (low complexity) spans 128 to 139 (AGVGARGPVGRA). The segment covering 143–169 (SKSEKPSTSRDKDYRARGRDDKGRKNM) has biased composition (basic and acidic residues). Ser-174 is subject to Phosphoserine. Residue 248–255 (GPPGTGKT) coordinates ATP.

It belongs to the AAA ATPase family. Katanin p60 subunit A1 subfamily. A-like 1 sub-subfamily. Interacts with KATNB1 and KATNBL1. In terms of tissue distribution, expressed in testis, restricted to Sertoli cells (at protein level).

It localises to the cytoplasm. The protein localises to the cytoskeleton. The protein resides in the spindle pole. It is found in the spindle. It carries out the reaction n ATP + n H2O + a microtubule = n ADP + n phosphate + (n+1) alpha/beta tubulin heterodimers.. Its function is as follows. Regulates microtubule dynamics in Sertoli cells, a process that is essential for spermiogenesis and male fertility. Severs microtubules in an ATP-dependent manner, promoting rapid reorganization of cellular microtubule arrays. Has microtubule-severing activity in vitro. The polypeptide is Katanin p60 ATPase-containing subunit A-like 1 (Homo sapiens (Human)).